We begin with the raw amino-acid sequence, 173 residues long: NADH-quinone oxidoreductase subunit I 1 (173 aa).

2 4Fe-4S ferredoxin-type domains span residues I41–A73 and E83–D112. [4Fe-4S] cluster contacts are provided by C53, C56, C59, C63, C92, C95, C98, and C102.

This sequence belongs to the complex I 23 kDa subunit family. As to quaternary structure, NDH-1 is composed of 14 different subunits. Subunits NuoA, H, J, K, L, M, N constitute the membrane sector of the complex. [4Fe-4S] cluster is required as a cofactor.

It localises to the cell inner membrane. It catalyses the reaction a quinone + NADH + 5 H(+)(in) = a quinol + NAD(+) + 4 H(+)(out). NDH-1 shuttles electrons from NADH, via FMN and iron-sulfur (Fe-S) centers, to quinones in the respiratory chain. The immediate electron acceptor for the enzyme in this species is believed to be ubiquinone. Couples the redox reaction to proton translocation (for every two electrons transferred, four hydrogen ions are translocated across the cytoplasmic membrane), and thus conserves the redox energy in a proton gradient. The protein is NADH-quinone oxidoreductase subunit I 1 of Rhodopseudomonas palustris (strain BisA53).